The following is a 715-amino-acid chain: Fatty acid oxidation complex subunit alpha (715 aa).

The enoyl-CoA hydratase stretch occupies residues 1 to 190; the sequence is MTTTSAFMLN…KAGLVDDVVP (190 aa). The tract at residues 306-715 is 3-hydroxyacyl-CoA dehydrogenase; the sequence is GPLNSVGILG…WTNGETDQGN (410 aa).

It in the N-terminal section; belongs to the enoyl-CoA hydratase/isomerase family. This sequence in the central section; belongs to the 3-hydroxyacyl-CoA dehydrogenase family. In terms of assembly, heterotetramer of two alpha chains (FadJ) and two beta chains (FadI).

The protein localises to the cytoplasm. It carries out the reaction a (3S)-3-hydroxyacyl-CoA = a (2E)-enoyl-CoA + H2O. The enzyme catalyses a 4-saturated-(3S)-3-hydroxyacyl-CoA = a (3E)-enoyl-CoA + H2O. It catalyses the reaction a (3S)-3-hydroxyacyl-CoA + NAD(+) = a 3-oxoacyl-CoA + NADH + H(+). The catalysed reaction is (3S)-3-hydroxybutanoyl-CoA = (3R)-3-hydroxybutanoyl-CoA. Its pathway is lipid metabolism; fatty acid beta-oxidation. Its function is as follows. Catalyzes the formation of a hydroxyacyl-CoA by addition of water on enoyl-CoA. Also exhibits 3-hydroxyacyl-CoA epimerase and 3-hydroxyacyl-CoA dehydrogenase activities. In Salmonella newport (strain SL254), this protein is Fatty acid oxidation complex subunit alpha.